Reading from the N-terminus, the 447-residue chain is Hydroxymethylglutaryl-CoA synthase (447 aa).

Glu-86 acts as the Proton donor/acceptor in catalysis. The Acyl-thioester intermediate role is filled by Cys-118. (3S)-3-hydroxy-3-methylglutaryl-CoA is bound by residues Cys-118, Asn-156, Thr-160, Ser-210, His-250, Lys-259, Asn-327, and Ser-361. His-250 serves as the catalytic Proton donor/acceptor. Thr-398 bears the Phosphothreonine mark.

The protein belongs to the thiolase-like superfamily. HMG-CoA synthase family.

It carries out the reaction acetoacetyl-CoA + acetyl-CoA + H2O = (3S)-3-hydroxy-3-methylglutaryl-CoA + CoA + H(+). It functions in the pathway metabolic intermediate biosynthesis; (R)-mevalonate biosynthesis; (R)-mevalonate from acetyl-CoA: step 2/3. Hydroxymethylglutaryl-CoA synthase; part of the first module of ergosterol biosynthesis pathway that includes the early steps of the pathway, conserved across all eukaryotes, and which results in the formation of mevalonate from acetyl-coenzyme A (acetyl-CoA). Hcs1 condenses acetyl-CoA with acetoacetyl-CoA to form hydroxymethylglutaryl-CoA (HMG-CoA). The first module starts with the action of the cytosolic acetyl-CoA acetyltransferase eg10 that catalyzes the formation of acetoacetyl-CoA. The hydroxymethylglutaryl-CoA synthases erg13 then condenses acetyl-CoA with acetoacetyl-CoA to form HMG-CoA. The rate-limiting step of the early module is the reduction to mevalonate by the 3-hydroxy-3-methylglutaryl-coenzyme A (HMG-CoA) reductases hcs1. The sequence is that of Hydroxymethylglutaryl-CoA synthase from Schizosaccharomyces pombe (strain 972 / ATCC 24843) (Fission yeast).